The sequence spans 743 residues: Phenylalanine ammonia-lyase 1 (743 aa).

The Proton donor/acceptor role is filled by tyrosine 120. Residues 224–226 (ASG) constitute a cross-link (5-imidazolinone (Ala-Gly)). Serine 225 carries the 2,3-didehydroalanine (Ser) modification. (E)-cinnamate-binding residues include asparagine 287, glutamine 377, arginine 383, asparagine 413, lysine 484, glutamate 512, and asparagine 515.

Belongs to the PAL/histidase family. In terms of assembly, homotetramer. Contains an active site 4-methylidene-imidazol-5-one (MIO), which is formed autocatalytically by cyclization and dehydration of residues Ala-Ser-Gly.

The protein localises to the cytoplasm. The catalysed reaction is L-phenylalanine = (E)-cinnamate + NH4(+). It participates in phenylpropanoid metabolism; trans-cinnamate biosynthesis; trans-cinnamate from L-phenylalanine: step 1/1. Catalyzes the non-oxidative deamination of L-phenylalanine to form trans-cinnamic acid and a free ammonium ion. Facilitates the commitment step in phenylpropanoid pathways that produce secondary metabolites such as lignins, coumarins and flavonoids. The polypeptide is Phenylalanine ammonia-lyase 1 (Pleurotus ostreatus (Oyster mushroom)).